The chain runs to 486 residues: Vanillin dehydrogenase (486 aa).

NAD(+)-binding positions include Gly210 to Pro211, Gly230 to Ser231, and Glu252 to Gly254. Residue Glu252 is the Proton acceptor of the active site. Cys286 serves as the catalytic Nucleophile. An NAD(+)-binding site is contributed by Glu380 to Phe382.

This sequence belongs to the aldehyde dehydrogenase family.

The catalysed reaction is vanillin + NAD(+) + H2O = vanillate + NADH + 2 H(+). Functionally, catalyzes NAD(+)-dependent oxidation of vanillin to vanillate. Also oxidizes other aromatic aldehydes including benzaldehyde, coniferyl aldehyde and cinnamaldehyde, but has a preference for vanillin. Not active with NADP(+). Involved in the degradation pathway of lignin-derived aromatic compounds of plant cell walls. Catalyzes the conversion of vanillin to vanillate due to toxicity of vanillin to the cells. This chain is Vanillin dehydrogenase, found in Amycolatopsis sp. (strain ATCC 39116 / 75iv2).